Here is a 244-residue protein sequence, read N- to C-terminus: MNHGYRTIEFLGLTFNLTNILMITVASVIVLLIAILTTRTLSIRPGKAQNFMEWIVDFVRNIIGSTMDLKTGANFLALGVTLLMYIFVSNMLGLPFSITIGHELWWKSPTADPAITLTLAVMVVALTHYYGVKMKGLKEYSKDYLRPVPFMLPMKIIEEFANTLTLGLRLYGNIFAGEILLGLLAGLATSHYSQSVALGLVGTIGAILPMLAWQAFSLFIGAIQAFIFTMLTMVYMSHKISHDH.

Helical transmembrane passes span 17–37 (LTNI…AILT), 75–95 (FLAL…LGLP), 112–132 (DPAI…YYGV), 170–190 (LYGN…LATS), and 221–241 (GAIQ…HKIS).

This sequence belongs to the ATPase A chain family. As to quaternary structure, F-type ATPases have 2 components, CF(1) - the catalytic core - and CF(0) - the membrane proton channel. CF(1) has five subunits: alpha(3), beta(3), gamma(1), delta(1), epsilon(1). CF(0) has three main subunits: a(1), b(2) and c(9-12). The alpha and beta chains form an alternating ring which encloses part of the gamma chain. CF(1) is attached to CF(0) by a central stalk formed by the gamma and epsilon chains, while a peripheral stalk is formed by the delta and b chains. The F(1)F(0) complex interacts with SpoIIIJ and YqjG; YqgA is found in the same complex.

Its subcellular location is the cell membrane. In terms of biological role, key component of the proton channel; it plays a direct role in the translocation of protons across the membrane. This chain is ATP synthase subunit a, found in Bacillus subtilis (strain 168).